The chain runs to 24 residues: Brevinin-1Ba (24 aa).

Cysteines 18 and 24 form a disulfide.

As to expression, expressed by the skin glands.

Its subcellular location is the secreted. In terms of biological role, antibacterial activity against Gram-positive bacterium S.aureus. The chain is Brevinin-1Ba from Lithobates berlandieri (Rio Grande leopard frog).